The following is a 276-amino-acid chain: Adenylyl-sulfate kinase 1, chloroplastic (276 aa).

The transit peptide at 1–38 (MIAAGAKSLLGLSMASPKGIFDSNSMSNSRSVVVVRAC) directs the protein to the chloroplast. The disordered stretch occupies residues 46-74 (TLSHNKNGSIPEVKSINGHTGQKQGPLST). Residues 62 to 74 (NGHTGQKQGPLST) are compositionally biased toward polar residues. Position 108 to 116 (108 to 116 (GLSGSGKST)) interacts with ATP. Residues D138, R141, R155, N158, 181–182 (IS), and G231 each bind substrate. The active-site Phosphoserine intermediate is S182.

The protein belongs to the APS kinase family. In terms of assembly, homodimer; disulfide-linked. Interacts with APK2. As to expression, expressed in root vasculature, root tips, leaf epidermal and guard cells, pollen grains and funiculus of developing seeds.

The protein localises to the plastid. It localises to the chloroplast. The catalysed reaction is adenosine 5'-phosphosulfate + ATP = 3'-phosphoadenylyl sulfate + ADP + H(+). It participates in sulfur metabolism; hydrogen sulfide biosynthesis; sulfite from sulfate: step 2/3. In terms of biological role, catalyzes the synthesis of activated sulfate. Essential for plant reproduction and viability. Required for the production of glucosinolates. The chain is Adenylyl-sulfate kinase 1, chloroplastic (APK1) from Arabidopsis thaliana (Mouse-ear cress).